We begin with the raw amino-acid sequence, 24 residues long: Myotoxin TmC4-47.2 (24 aa).

The tract at residues lysine 1–methionine 24 is disordered. Residues tryptophan 10–methionine 24 are compositionally biased toward basic residues. A C-type lectin domain is found at histidine 13–methionine 24.

In terms of tissue distribution, expressed by the venom gland.

The protein localises to the secreted. Its function is as follows. Able to depolarize frog skeletal muscle fibers, but has no effects on squid giant axons. Tetrodotoxin is able to partially antagonize the depolarization. Induces myonecrosis. This Thalassophryne maculosa (Cano toadfish) protein is Myotoxin TmC4-47.2.